The chain runs to 711 residues: Choline transporter-like protein 2 (711 aa).

The Cytoplasmic portion of the chain corresponds to 1–33; it reads MGDERPHYYGKHGTPQKYDPTFKGPIYNRGCTD. At threonine 14 the chain carries Phosphothreonine. The helical transmembrane segment at 34–54 threads the bilayer; it reads VICCVFLLVAIVGYVAVGIIA. The Extracellular segment spans residues 55 to 232; sequence WTHGDPRKVI…RIFEDYTVSW (178 aa). N-linked (GlcNAc...) asparagine glycosylation is found at asparagine 187 and asparagine 200. A helical transmembrane segment spans residues 233–253; the sequence is YWIIIGLVIAMAMSLLFIILL. Topologically, residues 254 to 256 are cytoplasmic; sequence RFL. Residues 257–277 form a helical membrane-spanning segment; sequence AGIMVWVMIIMVILVLGYGIF. Over 278–315 the chain is Extracellular; the sequence is HCYMEYSRLRGEAGSDVSLVDLGFQTDFRVYLHLRQTW. Residues 316 to 336 traverse the membrane as a helical segment; sequence LAFMIILSILEVIIILLLIFL. Over 337 to 364 the chain is Cytoplasmic; it reads RKRILIAIALIKEASRAVGYVMCTMLYP. Residues 365 to 385 traverse the membrane as a helical segment; the sequence is LVTFFLLCLCIAYWASTAVFL. Topologically, residues 386 to 440 are extracellular; the sequence is STSNEAVYKIFDDGLCPFTAKTCNPETFPSSNESRQCPNARCQFAFYGGESGYHR. The N-linked (GlcNAc...) asparagine glycan is linked to asparagine 417. A helical membrane pass occupies residues 441-461; sequence ALLGLQIFNAFMFFWLANFVL. Residues 462 to 504 lie on the Cytoplasmic side of the membrane; that stretch reads ALGQVTLAGAFASYYWALRKPDDLPAFPLFSAFGRALRYHTGS. The helical transmembrane segment at 505-525 threads the bilayer; sequence LAFGALILAIVQIIRVILEYL. Over 526–563 the chain is Extracellular; the sequence is DQRLKAAENKFAKCLMTCLKCCFWCLEKFIKFLNRNAY. The helical transmembrane segment at 564–584 threads the bilayer; sequence IMIAIYGTNFCTSARNAFFLL. The Cytoplasmic segment spans residues 585 to 599; sequence MRNIIRVAVLDKVTD. The helical transmembrane segment at 600–620 threads the bilayer; that stretch reads FLFLLGKLLIVGSVGILAFFF. Topologically, residues 621-638 are extracellular; that stretch reads FTHRIRIVQDTAPPLNYY. The chain crosses the membrane as a helical span at residues 639-659; that stretch reads WVPILTVIVGSYLIAHGFFSV. Over 660 to 711 the chain is Cytoplasmic; the sequence is YGMCVDTLFLCFCEDLERNDGSQERPYFMSPELRDILLKGSAEEGKRAEAEE.

This sequence belongs to the CTL (choline transporter-like) family. Interacts with COCH. Post-translationally, N-glycosylated.

The protein resides in the cell membrane. It localises to the mitochondrion outer membrane. It carries out the reaction choline(out) + n H(+)(in) = choline(in) + n H(+)(out). The catalysed reaction is ethanolamine(out) + n H(+)(in) = ethanolamine(in) + n H(+)(out). Functionally, choline/H+ antiporter, mainly in mitochodria. Also acts as a low-affinity ethanolamine/H+ antiporter, regulating the supply of extracellular ethanolamine (Etn) for the CDP-Etn pathway, redistribute intracellular Etn and balance the CDP-Cho and CDP-Etn arms of the Kennedy pathway. In Pongo abelii (Sumatran orangutan), this protein is Choline transporter-like protein 2 (SLC44A2).